A 55-amino-acid polypeptide reads, in one-letter code: Large ribosomal subunit protein bL33 (55 aa).

Belongs to the bacterial ribosomal protein bL33 family.

The chain is Large ribosomal subunit protein bL33 from Deinococcus geothermalis (strain DSM 11300 / CIP 105573 / AG-3a).